We begin with the raw amino-acid sequence, 466 residues long: 23S rRNA (uracil(1939)-C(5))-methyltransferase RlmD (466 aa).

Positions 1–54 (MVDVLNIESLDLEARGIAHRDGKVLFVEGALPGERVTVQTVRRKPSYEIAKVEE) constitute a TRAM domain. The [4Fe-4S] cluster site is built by cysteine 67, cysteine 73, cysteine 76, and cysteine 155. Glutamine 264, phenylalanine 293, asparagine 298, glutamate 314, asparagine 342, and aspartate 363 together coordinate S-adenosyl-L-methionine. Cysteine 393 acts as the Nucleophile in catalysis.

This sequence belongs to the class I-like SAM-binding methyltransferase superfamily. RNA M5U methyltransferase family. RlmD subfamily.

It catalyses the reaction uridine(1939) in 23S rRNA + S-adenosyl-L-methionine = 5-methyluridine(1939) in 23S rRNA + S-adenosyl-L-homocysteine + H(+). Functionally, catalyzes the formation of 5-methyl-uridine at position 1939 (m5U1939) in 23S rRNA. The chain is 23S rRNA (uracil(1939)-C(5))-methyltransferase RlmD from Bordetella bronchiseptica (strain ATCC BAA-588 / NCTC 13252 / RB50) (Alcaligenes bronchisepticus).